The following is a 127-amino-acid chain: Small ribosomal subunit protein uS11 (127 aa).

This sequence belongs to the universal ribosomal protein uS11 family. As to quaternary structure, part of the 30S ribosomal subunit. Interacts with proteins S7 and S18. Binds to IF-3.

Functionally, located on the platform of the 30S subunit, it bridges several disparate RNA helices of the 16S rRNA. Forms part of the Shine-Dalgarno cleft in the 70S ribosome. This is Small ribosomal subunit protein uS11 from Rickettsia canadensis (strain McKiel).